The chain runs to 252 residues: Cell division protein ZapD (252 aa).

The protein belongs to the ZapD family. As to quaternary structure, interacts with FtsZ.

The protein localises to the cytoplasm. Functionally, cell division factor that enhances FtsZ-ring assembly. Directly interacts with FtsZ and promotes bundling of FtsZ protofilaments, with a reduction in FtsZ GTPase activity. The polypeptide is Cell division protein ZapD (Cupriavidus taiwanensis (strain DSM 17343 / BCRC 17206 / CCUG 44338 / CIP 107171 / LMG 19424 / R1) (Ralstonia taiwanensis (strain LMG 19424))).